Here is a 464-residue protein sequence, read N- to C-terminus: V-type ATP synthase beta chain (464 aa).

This sequence belongs to the ATPase alpha/beta chains family.

Produces ATP from ADP in the presence of a proton gradient across the membrane. The V-type beta chain is a regulatory subunit. In Streptococcus gordonii (strain Challis / ATCC 35105 / BCRC 15272 / CH1 / DL1 / V288), this protein is V-type ATP synthase beta chain.